The primary structure comprises 210 residues: Imidazole glycerol phosphate synthase subunit HisH (210 aa).

In terms of domain architecture, Glutamine amidotransferase type-1 spans 3 to 208; the sequence is PIAIIDYGMG…GELVRHAGNA (206 aa). The Nucleophile role is filled by Cys-81. Catalysis depends on residues His-183 and Glu-185.

In terms of assembly, heterodimer of HisH and HisF.

Its subcellular location is the cytoplasm. It carries out the reaction 5-[(5-phospho-1-deoxy-D-ribulos-1-ylimino)methylamino]-1-(5-phospho-beta-D-ribosyl)imidazole-4-carboxamide + L-glutamine = D-erythro-1-(imidazol-4-yl)glycerol 3-phosphate + 5-amino-1-(5-phospho-beta-D-ribosyl)imidazole-4-carboxamide + L-glutamate + H(+). It catalyses the reaction L-glutamine + H2O = L-glutamate + NH4(+). The protein operates within amino-acid biosynthesis; L-histidine biosynthesis; L-histidine from 5-phospho-alpha-D-ribose 1-diphosphate: step 5/9. Functionally, IGPS catalyzes the conversion of PRFAR and glutamine to IGP, AICAR and glutamate. The HisH subunit catalyzes the hydrolysis of glutamine to glutamate and ammonia as part of the synthesis of IGP and AICAR. The resulting ammonia molecule is channeled to the active site of HisF. This chain is Imidazole glycerol phosphate synthase subunit HisH, found in Moorella thermoacetica (strain ATCC 39073 / JCM 9320).